The sequence spans 395 residues: Elongation factor Tu (395 aa).

Residues 10 to 204 (KPHVNIGTIG…AVDSYIPTPQ (195 aa)) enclose the tr-type G domain. The segment at 19-26 (GHVDHGKT) is G1. Residue 19–26 (GHVDHGKT) participates in GTP binding. Position 26 (T26) interacts with Mg(2+). Residues 60–64 (GITIN) form a G2 region. The segment at 81–84 (DCPG) is G3. Residues 81–85 (DCPGH) and 136–139 (NKCD) each bind GTP. The segment at 136–139 (NKCD) is G4. Residues 174–176 (SAL) are G5.

This sequence belongs to the TRAFAC class translation factor GTPase superfamily. Classic translation factor GTPase family. EF-Tu/EF-1A subfamily. Monomer.

The protein localises to the cytoplasm. The catalysed reaction is GTP + H2O = GDP + phosphate + H(+). Functionally, GTP hydrolase that promotes the GTP-dependent binding of aminoacyl-tRNA to the A-site of ribosomes during protein biosynthesis. This is Elongation factor Tu from Symbiobacterium thermophilum (strain DSM 24528 / JCM 14929 / IAM 14863 / T).